A 92-amino-acid polypeptide reads, in one-letter code: Large ribosomal subunit protein bL31 (92 aa).

This sequence belongs to the bacterial ribosomal protein bL31 family. Type A subfamily. Part of the 50S ribosomal subunit.

Its function is as follows. Binds the 23S rRNA. In Mesoplasma florum (strain ATCC 33453 / NBRC 100688 / NCTC 11704 / L1) (Acholeplasma florum), this protein is Large ribosomal subunit protein bL31.